The following is a 307-amino-acid chain: Small ribosomal subunit biogenesis GTPase RsgA (307 aa).

The 163-residue stretch at 78–240 folds into the CP-type G domain; it reads HKTAFGHLIA…VIDTPGIKEL (163 aa). GTP contacts are provided by residues 128–131 and 182–190; these read NKSD and GHSGVGKST. The Zn(2+) site is built by C264, C269, H271, and C277.

Belongs to the TRAFAC class YlqF/YawG GTPase family. RsgA subfamily. In terms of assembly, monomer. Associates with 30S ribosomal subunit, binds 16S rRNA. Zn(2+) is required as a cofactor.

It is found in the cytoplasm. Functionally, one of several proteins that assist in the late maturation steps of the functional core of the 30S ribosomal subunit. Helps release RbfA from mature subunits. May play a role in the assembly of ribosomal proteins into the subunit. Circularly permuted GTPase that catalyzes slow GTP hydrolysis, GTPase activity is stimulated by the 30S ribosomal subunit. The protein is Small ribosomal subunit biogenesis GTPase RsgA of Cytophaga hutchinsonii (strain ATCC 33406 / DSM 1761 / CIP 103989 / NBRC 15051 / NCIMB 9469 / D465).